The sequence spans 142 residues: Large ribosomal subunit protein uL11 (142 aa).

The protein belongs to the universal ribosomal protein uL11 family. As to quaternary structure, part of the ribosomal stalk of the 50S ribosomal subunit. Interacts with L10 and the large rRNA to form the base of the stalk. L10 forms an elongated spine to which L12 dimers bind in a sequential fashion forming a multimeric L10(L12)X complex. In terms of processing, one or more lysine residues are methylated.

Its function is as follows. Forms part of the ribosomal stalk which helps the ribosome interact with GTP-bound translation factors. This Hamiltonella defensa subsp. Acyrthosiphon pisum (strain 5AT) protein is Large ribosomal subunit protein uL11.